A 220-amino-acid polypeptide reads, in one-letter code: UPF0502 protein CV_4303 (220 aa).

The protein belongs to the UPF0502 family.

The polypeptide is UPF0502 protein CV_4303 (Chromobacterium violaceum (strain ATCC 12472 / DSM 30191 / JCM 1249 / CCUG 213 / NBRC 12614 / NCIMB 9131 / NCTC 9757 / MK)).